The following is a 358-amino-acid chain: Neutral protease 2 homolog PADG_00776 (358 aa).

The signal sequence occupies residues 1 to 19 (MRRVSGILAVAAFTISAFA). Residues 20–185 (GVIQPVAKDA…MNQFVKIAKL (166 aa)) constitute a propeptide that is removed on maturation. 2 cysteine pairs are disulfide-bonded: C188/C259 and C266/C284. N249 is a glycosylation site (N-linked (GlcNAc...) asparagine). Residue H309 participates in Zn(2+) binding. E310 is a catalytic residue. Residues H313 and D324 each contribute to the Zn(2+) site.

Belongs to the peptidase M35 family. Requires Zn(2+) as cofactor.

The protein localises to the secreted. It catalyses the reaction Preferential cleavage of bonds with hydrophobic residues in P1'. Also 3-Asn-|-Gln-4 and 8-Gly-|-Ser-9 bonds in insulin B chain.. Its function is as follows. Secreted metalloproteinase that allows assimilation of proteinaceous substrates. Shows high activities on basic nuclear substrates such as histone and protamine. The polypeptide is Neutral protease 2 homolog PADG_00776 (Paracoccidioides brasiliensis (strain Pb18)).